The following is a 284-amino-acid chain: Nucleotide-binding protein Shewmr7_3352 (284 aa).

Position 8–15 (Gly-8–Ser-15) interacts with ATP. Asp-56 to Asn-59 lines the GTP pocket.

Belongs to the RapZ-like family.

Displays ATPase and GTPase activities. This Shewanella sp. (strain MR-7) protein is Nucleotide-binding protein Shewmr7_3352.